A 307-amino-acid chain; its full sequence is Glutaminase 1 (307 aa).

Substrate-binding residues include Ser-62, Asn-114, Glu-159, Asn-166, Tyr-190, Tyr-242, and Val-260.

The protein belongs to the glutaminase family. In terms of assembly, homotetramer.

The catalysed reaction is L-glutamine + H2O = L-glutamate + NH4(+). This chain is Glutaminase 1, found in Clostridium perfringens (strain 13 / Type A).